The primary structure comprises 335 residues: Urokinase plasminogen activator surface receptor (335 aa).

Residues 1 to 22 (MGHPPLLPLLLLLHTCVPASWG) form the signal peptide. 3 consecutive UPAR/Ly6 domains span residues 23-114 (LRCM…RSRY), 115-213 (LECI…PQNG), and 214-305 (RQCY…YRSG). Cystine bridges form between Cys-25–Cys-46, Cys-28–Cys-34, and Cys-39–Cys-67. Residue Asn-74 is glycosylated (N-linked (GlcNAc...) asparagine). Cystine bridges form between Cys-93/Cys-98, Cys-117/Cys-144, Cys-120/Cys-127, Cys-137/Cys-169, Cys-175/Cys-192, Cys-193/Cys-198, Cys-216/Cys-244, Cys-219/Cys-227, Cys-237/Cys-263, Cys-269/Cys-287, and Cys-288/Cys-293. 4 N-linked (GlcNAc...) asparagine glycosylation sites follow: Asn-184, Asn-194, Asn-222, and Asn-255. Residue Gly-305 is the site of GPI-anchor amidated glycine attachment. Positions 306-335 (AAPQPGPAHLSLTITLLMTARLWGGTLLWT) are cleaved as a propeptide — removed in mature form.

In terms of assembly, monomer. Interacts with MRC2. Interacts (via the UPAR/Ly6 domains) with SRPX2. Interacts with FAP (seprase); the interaction occurs at the cell surface of invadopodia membrane. Interacts with SORL1 (via N-terminal ectodomain); this interaction decreases PLAUR internalization. The ternary complex composed of PLAUR-PLAU-SERPINE1 also interacts with SORL1. Interacts with CD82; this interaction prevents PLAUR from binding to its high affinity ligand PLAU. In terms of tissue distribution, expressed in neurons of the rolandic area of the brain (at protein level). Expressed in the brain.

It localises to the cell membrane. The protein resides in the cell projection. Its subcellular location is the invadopodium membrane. It is found in the secreted. Its function is as follows. Acts as a receptor for urokinase plasminogen activator. Plays a role in localizing and promoting plasmin formation. Mediates the proteolysis-independent signal transduction activation effects of U-PA. It is subject to negative-feedback regulation by U-PA which cleaves it into an inactive form. The chain is Urokinase plasminogen activator surface receptor (PLAUR) from Homo sapiens (Human).